The sequence spans 341 residues: HTH-type transcriptional repressor PurR (341 aa).

An HTH lacI-type domain is found at 2-56 (ATIKDVAKRANVSTTTVSHVINKTRFVAEETRNAVWAAIKELHYSPSAVARSLKV). The H-T-H motif DNA-binding region spans 4–23 (IKDVAKRANVSTTTVSHVIN). Residues 48-56 (SAVARSLKV) mediate DNA binding. Positions 73, 190, 192, 221, and 275 each coordinate hypoxanthine.

Homodimer.

It participates in purine metabolism; purine nucleotide biosynthesis [regulation]. Is the main repressor of the genes involved in the de novo synthesis of purine nucleotides, regulating purB, purC, purEK, purF, purHD, purL, purMN and guaBA expression. PurR is allosterically activated to bind its cognate DNA by binding the purine corepressors, hypoxanthine or guanine, thereby effecting transcription repression. This chain is HTH-type transcriptional repressor PurR, found in Salmonella typhi.